The primary structure comprises 492 residues: Probable cobyric acid synthase (492 aa).

Residues 248–434 form the GATase cobBQ-type domain; sequence PVRIAVVRLP…MHGLFQNPGA (187 aa). The active-site Nucleophile is the C327. The active site involves H426.

The protein belongs to the CobB/CobQ family. CobQ subfamily.

The protein operates within cofactor biosynthesis; adenosylcobalamin biosynthesis. Functionally, catalyzes amidations at positions B, D, E, and G on adenosylcobyrinic A,C-diamide. NH(2) groups are provided by glutamine, and one molecule of ATP is hydrogenolyzed for each amidation. The sequence is that of Probable cobyric acid synthase from Methanoculleus marisnigri (strain ATCC 35101 / DSM 1498 / JR1).